The following is a 1530-amino-acid chain: DNA-directed RNA polymerase III subunit RPC1 (1530 aa).

Residues Cys74, Cys77, Cys84, His87, Cys114, Cys117, and Cys161 each contribute to the Zn(2+) site. The Mg(2+) site is built by Asp503, Asp505, and Asp507. The tract at residues 846–858 is bridging helix; that stretch reads PTEFFFHTMAGRE. Basic and acidic residues predominate over residues 992 to 1001; it reads EEQESREDAL. 2 disordered regions span residues 992-1016 and 1057-1099; these read EEQE…SRPR and NLLN…SKEG.

It belongs to the RNA polymerase beta' chain family. In terms of assembly, component of the RNA polymerase III (Pol III) complex consisting of 17 subunits.

It is found in the nucleus. It catalyses the reaction RNA(n) + a ribonucleoside 5'-triphosphate = RNA(n+1) + diphosphate. Its function is as follows. DNA-dependent RNA polymerase catalyzes the transcription of DNA into RNA using the four ribonucleoside triphosphates as substrates. Largest and catalytic core component of RNA polymerase III which synthesizes small RNAs, such as 5S rRNA and tRNAs. Forms the polymerase active center together with the second largest subunit. A single-stranded DNA template strand of the promoter is positioned within the central active site cleft of Pol III. A bridging helix emanates from RPC1 and crosses the cleft near the catalytic site and is thought to promote translocation of Pol III by acting as a ratchet that moves the RNA-DNA hybrid through the active site by switching from straight to bent conformations at each step of nucleotide addition. The protein is DNA-directed RNA polymerase III subunit RPC1 of Trypanosoma brucei brucei.